The sequence spans 475 residues: tRNA-dihydrouridine(16/17) synthase [NAD(P)(+)]-like (475 aa).

Residues 23–25 and Q79 each bind FMN; that span reads PMV. The active-site Proton donor is the C108. FMN-binding positions include K147, H175, 208–210, and 232–233; these read NGN and AE. Residues 343 to 388 form a disordered region; sequence GPREGSKENSGGRSKRALEEEEGSMEGLSKNKLKKQLRNPHKTFDP. The segment covering 373–383 has biased composition (basic residues); it reads NKLKKQLRNPH.

The protein belongs to the Dus family. Dus1 subfamily. Requires FMN as cofactor.

The protein resides in the cytoplasm. It localises to the nucleus. The catalysed reaction is 5,6-dihydrouridine(16) in tRNA + NADP(+) = uridine(16) in tRNA + NADPH + H(+). It catalyses the reaction 5,6-dihydrouridine(16) in tRNA + NAD(+) = uridine(16) in tRNA + NADH + H(+). The enzyme catalyses 5,6-dihydrouridine(17) in tRNA + NAD(+) = uridine(17) in tRNA + NADH + H(+). It carries out the reaction 5,6-dihydrouridine(17) in tRNA + NADP(+) = uridine(17) in tRNA + NADPH + H(+). Its function is as follows. Catalyzes the synthesis of dihydrouridine, a modified base found in the D-loop of most tRNAs. Specifically modifies U16 and U17 in cytoplasmic tRNAs. Affects the level of some mature tRNA and thereby the total cellular translation. This Mus musculus (Mouse) protein is tRNA-dihydrouridine(16/17) synthase [NAD(P)(+)]-like (Dus1l).